The chain runs to 237 residues: 2-C-methyl-D-erythritol 4-phosphate cytidylyltransferase (237 aa).

It belongs to the IspD/TarI cytidylyltransferase family. IspD subfamily.

The catalysed reaction is 2-C-methyl-D-erythritol 4-phosphate + CTP + H(+) = 4-CDP-2-C-methyl-D-erythritol + diphosphate. The protein operates within isoprenoid biosynthesis; isopentenyl diphosphate biosynthesis via DXP pathway; isopentenyl diphosphate from 1-deoxy-D-xylulose 5-phosphate: step 2/6. Its function is as follows. Catalyzes the formation of 4-diphosphocytidyl-2-C-methyl-D-erythritol from CTP and 2-C-methyl-D-erythritol 4-phosphate (MEP). The protein is 2-C-methyl-D-erythritol 4-phosphate cytidylyltransferase of Clostridioides difficile (strain 630) (Peptoclostridium difficile).